Consider the following 341-residue polypeptide: Anthranilate phosphoribosyltransferase (341 aa).

Residues Gly84, Gly87–Asp88, Thr92, Asn94–Thr97, Lys112–Ser120, and Ser124 contribute to the 5-phospho-alpha-D-ribose 1-diphosphate site. Gly84 serves as a coordination point for anthranilate. A Mg(2+)-binding site is contributed by Thr96. An anthranilate-binding site is contributed by Asn115. Arg170 is a binding site for anthranilate. Residues Asp228 and Glu229 each contribute to the Mg(2+) site.

The protein belongs to the anthranilate phosphoribosyltransferase family. Homodimer. Mg(2+) serves as cofactor.

It carries out the reaction N-(5-phospho-beta-D-ribosyl)anthranilate + diphosphate = 5-phospho-alpha-D-ribose 1-diphosphate + anthranilate. Its pathway is amino-acid biosynthesis; L-tryptophan biosynthesis; L-tryptophan from chorismate: step 2/5. Its function is as follows. Catalyzes the transfer of the phosphoribosyl group of 5-phosphorylribose-1-pyrophosphate (PRPP) to anthranilate to yield N-(5'-phosphoribosyl)-anthranilate (PRA). In Corynebacterium diphtheriae (strain ATCC 700971 / NCTC 13129 / Biotype gravis), this protein is Anthranilate phosphoribosyltransferase.